Consider the following 173-residue polypeptide: Crossover junction endodeoxyribonuclease RuvC (173 aa).

Residues Asp-8, Glu-67, and Asp-139 contribute to the active site. Residues Asp-8, Glu-67, and Asp-139 each contribute to the Mg(2+) site.

It belongs to the RuvC family. As to quaternary structure, homodimer which binds Holliday junction (HJ) DNA. The HJ becomes 2-fold symmetrical on binding to RuvC with unstacked arms; it has a different conformation from HJ DNA in complex with RuvA. In the full resolvosome a probable DNA-RuvA(4)-RuvB(12)-RuvC(2) complex forms which resolves the HJ. Mg(2+) serves as cofactor.

The protein resides in the cytoplasm. It catalyses the reaction Endonucleolytic cleavage at a junction such as a reciprocal single-stranded crossover between two homologous DNA duplexes (Holliday junction).. The RuvA-RuvB-RuvC complex processes Holliday junction (HJ) DNA during genetic recombination and DNA repair. Endonuclease that resolves HJ intermediates. Cleaves cruciform DNA by making single-stranded nicks across the HJ at symmetrical positions within the homologous arms, yielding a 5'-phosphate and a 3'-hydroxyl group; requires a central core of homology in the junction. The consensus cleavage sequence is 5'-(A/T)TT(C/G)-3'. Cleavage occurs on the 3'-side of the TT dinucleotide at the point of strand exchange. HJ branch migration catalyzed by RuvA-RuvB allows RuvC to scan DNA until it finds its consensus sequence, where it cleaves and resolves the cruciform DNA. This Yersinia pseudotuberculosis serotype O:1b (strain IP 31758) protein is Crossover junction endodeoxyribonuclease RuvC.